Here is a 319-residue protein sequence, read N- to C-terminus: Large ribosomal subunit protein uL10 (319 aa).

The interval 286 to 319 (AGDSGASAAPKEEEKAAEPEEESDEEMGFSLFDD) is disordered. Over residues 304–319 (PEEESDEEMGFSLFDD) the composition is skewed to acidic residues.

Belongs to the universal ribosomal protein uL10 family. P0 forms a pentameric complex by interaction with dimers of P1 and P2. Post-translationally, phosphorylated.

Its function is as follows. Ribosomal protein P0 is the functional equivalent of E.coli protein L10. The protein is Large ribosomal subunit protein uL10 (RP-P0) of Zea mays (Maize).